The primary structure comprises 260 residues: Neurotrophin-3 (260 aa).

A signal peptide spans 1–18 (MSILFYVMFLPYLCGIHA). The propeptide occupies 19–141 (TNMDKRNLPE…VNNRTSRRKR (123 aa)). Asparagine 134 is a glycosylation site (N-linked (GlcNAc...) asparagine). Intrachain disulfides connect cysteine 155–cysteine 220, cysteine 198–cysteine 249, and cysteine 208–cysteine 251.

This sequence belongs to the NGF-beta family.

The protein resides in the secreted. Seems to promote the survival of visceral and proprioceptive sensory neurons. The protein is Neurotrophin-3 (ntf3) of Xenopus laevis (African clawed frog).